Reading from the N-terminus, the 9439-residue chain is Extracellular matrix-binding protein ebh (9439 aa).

FIVAR domains are found at residues 1815–1871, 1901–1957, 1985–2041, 2071–2127, 2155–2211, 2241–2297, 2325–2381, 2411–2467, 2488–2551, 2581–2638, 2665–2720, 2748–2804, 2832–2888, 2918–2974, 3002–3058, 3088–3144, 3172–3228, 3258–3314, 3335–3398, 3428–3484, 3512–3567, 3595–3650, 3678–3733, 3802–3860, 3928–3983, 4056–4114, 4182–4240, 4308–4365, 4433–4491, and 4559–4617; these read ARRR…VNSA, AKEQ…INDA, AYDT…VRDA, AKKR…ITSE, AYNK…VTQA, AKNR…ISSE, AYNK…VEDA, AKEK…ITEN, DTTS…VNNA, ARNR…STEI, AKNQ…IRTN, AKTA…VSDE, AYNQ…VNNA, AKEQ…ISNA, AYNQ…VTAA, AKQQ…ITNE, AYNQ…VAQA, AKNQ…ISDE, DTTE…VNNA, ARLN…ITTE, AKTA…IKTN, IKRQ…VKES, AKNR…IRQN, SMTA…IDQK, AMTQ…LDPA, AMQA…VNQK, SMGT…VDNA, AMHT…INQK, VMEQ…IEQA, and SMQT…IDQT. A compositionally biased stretch (basic and acidic residues) spans 2495-2507; that stretch reads EVRKLSRRGDTNN. Residues 2495 to 2514 form a disordered region; that stretch reads EVRKLSRRGDTNNKKPSSVS. Residues 2925–2938 show a composition bias toward polar residues; that stretch reads AVDQVPSTEGMTQQ. The disordered stretch occupies residues 2925–2951; it reads AVDQVPSTEGMTQQTKDDYNSKQQAAQ. A disordered region spans residues 4649 to 4674; that stretch reads GYLNDPQKSGEESLVNGSNTRSEVEE. FIVAR domains follow at residues 4685-4743, 4811-4869, 4937-4995, 5063-5115, 5189-5246, 5314-5372, 5440-5498, 5566-5624, 5692-5750, 5818-5875, 5943-6000, 6068-6126, 6194-6252, and 6320-6378; these read AMKQ…IEQK, AMQA…IEQA, AMSN…IEQA, AMEA…VLDK, AMLG…INQL, LMGA…VTTA, AMGE…IDQA, AMKK…ITNA, AMKQ…IADT, DMST…LQDL, AMKA…IKQA, KMEE…INRT, AMQQ…IQAI, and EMGT…IADA. A compositionally biased stretch (polar residues) spans 5699–5712; sequence QVNQDDQISNSSPF. The interval 5699-5719 is disordered; sequence QVNQDDQISNSSPFINEDSDK. The tract at residues 6413 to 6434 is disordered; it reads NNSQRQSEHDEINSAPSRTEVS. 18 consecutive FIVAR domains span residues 6446–6504, 6572–6630, 6698–6755, 6823–6877, 6949–7007, 7075–7133, 7201–7259, 7327–7384, 7452–7510, 7578–7636, 7704–7762, 7830–7888, 7956–8010, 8078–8137, 8205–8264, 8332–8391, 8459–8518, and 8587–8643; these read AMRQ…IEDA, AMKA…INRA, SMNQ…IDQA, TMKA…ANDE, AMKK…INTI, SMNT…VERA, DMKK…IENA, AMKH…IKQL, AMEN…IEHA, AMKA…INSI, AMET…VDIV, AMKS…VRQA, VMGK…TKQA, IMGE…IDTF, AMKS…IQGL, AMKD…VLGL, KMKL…IQHL, and AMQG…ANII. Residues 9306–9324 form a helical membrane-spanning segment; that stretch reads TVGVITLTGLLSSFWLVLA. 3 stretches are compositionally biased toward basic and acidic residues: residues 9363–9375, 9386–9395, and 9404–9413; these read DKEE…DKHS, EKQLSEEDIH, and QNSDNKDTKQ. Residues 9363–9439 are disordered; sequence DKEEQIQNDD…VVKTKKRSKK (77 aa). The span at 9414–9439 shows a compositional bias: basic residues; it reads KKVTSKKKKTPQSTKKVVKTKKRSKK.

It is found in the cell membrane. The chain is Extracellular matrix-binding protein ebh (ebh) from Staphylococcus epidermidis (strain ATCC 12228 / FDA PCI 1200).